The primary structure comprises 79 residues: NADH-ubiquinone oxidoreductase chain 5 (79 aa).

The next 2 membrane-spanning stretches (helical) occupy residues threonine 5 to tyrosine 27 and valine 40 to serine 57.

It belongs to the complex I subunit 5 family. Core subunit of respiratory chain NADH dehydrogenase (Complex I) which is composed of 45 different subunits.

Its subcellular location is the mitochondrion inner membrane. It catalyses the reaction a ubiquinone + NADH + 5 H(+)(in) = a ubiquinol + NAD(+) + 4 H(+)(out). Functionally, core subunit of the mitochondrial membrane respiratory chain NADH dehydrogenase (Complex I) which catalyzes electron transfer from NADH through the respiratory chain, using ubiquinone as an electron acceptor. Essential for the catalytic activity and assembly of complex I. The protein is NADH-ubiquinone oxidoreductase chain 5 (MT-ND5) of Macaca fascicularis (Crab-eating macaque).